Reading from the N-terminus, the 489-residue chain is Glutamate--tRNA ligase (489 aa).

The short motif at 11 to 21 (PSPTGHLHIGG) is the 'HIGH' region element. Positions 253–257 (KLSKR) match the 'KMSKS' region motif. K256 provides a ligand contact to ATP.

It belongs to the class-I aminoacyl-tRNA synthetase family. Glutamate--tRNA ligase type 1 subfamily. Monomer.

It is found in the cytoplasm. It catalyses the reaction tRNA(Glu) + L-glutamate + ATP = L-glutamyl-tRNA(Glu) + AMP + diphosphate. Functionally, catalyzes the attachment of glutamate to tRNA(Glu) in a two-step reaction: glutamate is first activated by ATP to form Glu-AMP and then transferred to the acceptor end of tRNA(Glu). The chain is Glutamate--tRNA ligase from Geobacillus stearothermophilus (Bacillus stearothermophilus).